A 361-amino-acid polypeptide reads, in one-letter code: Cysteine-rich with EGF-like domain protein 2-B (361 aa).

The N-terminal stretch at 1–24 (MNGSRAWRLAAWLLLCLSCSAAVA) is a signal peptide. Residues 134–176 (DCLACLGGSERPCHGNGFCSGDGTRSGDGSCRCKAEYTGSFCL) enclose the EGF-like 1 domain. 3 disulfides stabilise this stretch: C138–C152, C146–C164, and C166–C175. A glycan (N-linked (GlcNAc...) asparagine) is linked at N188. FU repeat units follow at residues 191–238 (HAVC…EESP) and 251–298 (SFLC…SEKL). The EGF-like 2; calcium-binding domain occupies 288–329 (DVDECDASEKLCLRENEVCLNTAGSYKCTCSEGFEDKEGNCV). 3 disulfide bridges follow: C292–C306, C299–C315, and C317–C328. The interval 339-361 (ITEGETGTPASDTNILNTAHEDL) is disordered. The segment covering 346-355 (TPASDTNILN) has biased composition (polar residues).

It belongs to the CRELD family.

It is found in the secreted. Its subcellular location is the endoplasmic reticulum. In terms of biological role, possible role in neuronal acetylcholine receptor transport. The chain is Cysteine-rich with EGF-like domain protein 2-B (creld2-b) from Xenopus laevis (African clawed frog).